Here is a 527-residue protein sequence, read N- to C-terminus: Cytokinin dehydrogenase 3 (527 aa).

Positions 1–22 are cleaved as a signal peptide; that stretch reads MEVAMVCTRVNLLILILSLCSP. The FAD-binding PCMH-type domain occupies 52 to 231; that stretch reads LFHSPSAVLK…TRARILLQEA (180 aa). 3 residues coordinate FAD: A87, G89, and G91. H92 is modified (pros-8alpha-FAD histidine). The FAD site is built by S93, Q97, D155, T160, S166, I170, and I221. The N-linked (GlcNAc...) asparagine glycan is linked to N413. Positions 471 and 509 each coordinate FAD.

Belongs to the oxygen-dependent FAD-linked oxidoreductase family. In terms of assembly, monomer. FAD serves as cofactor. In terms of tissue distribution, expressed in inflorescence meristems. Highly expressed in lamina joints, and mainly in the parenchyma cells and vascular bundles on the abaxial side of the lamina joint. Expressed in roots, stems, leaves and young panicles.

The protein resides in the endoplasmic reticulum. It carries out the reaction N(6)-dimethylallyladenine + A + H2O = 3-methyl-2-butenal + adenine + AH2. Catalyzes the oxidation of cytokinins, a family of N(6)-substituted adenine derivatives, where the substituent is an isopentenyl group. Cytokinins are plant hormones essential for plant growth, development, and stress responses. Exhibits specific activities toward trans-zeatin (tZ) and isopentenyladenine (iP). Plays a role in lamina joint inclination. Regulates cell proliferation and vascular bundle number on the abaxial side of lamina joint. The protein is Cytokinin dehydrogenase 3 of Oryza sativa subsp. japonica (Rice).